The chain runs to 557 residues: Ribonuclease J 2 (557 aa).

The Zn(2+) site is built by H76, H78, H144, and E166. A substrate-binding site is contributed by 366–370 (HASSH).

The protein belongs to the metallo-beta-lactamase superfamily. RNA-metabolizing metallo-beta-lactamase-like family. Bacterial RNase J subfamily. As to quaternary structure, homodimer, may be a subunit of the RNA degradosome. The cofactor is Zn(2+).

The protein localises to the cytoplasm. Its function is as follows. An RNase that has 5'-3' exonuclease and possibly endoonuclease activity. Involved in maturation of rRNA and in some organisms also mRNA maturation and/or decay. The protein is Ribonuclease J 2 of Staphylococcus epidermidis (strain ATCC 35984 / DSM 28319 / BCRC 17069 / CCUG 31568 / BM 3577 / RP62A).